Here is a 365-residue protein sequence, read N- to C-terminus: 3-isopropylmalate dehydrogenase (365 aa).

Substrate-binding residues include arginine 96, arginine 106, arginine 134, and aspartate 224. The Mg(2+) site is built by aspartate 224, aspartate 248, and aspartate 252. 288–300 (GSAPTIAKQNIAN) serves as a coordination point for NAD(+).

This sequence belongs to the isocitrate and isopropylmalate dehydrogenases family. LeuB type 1 subfamily. Homodimer. It depends on Mg(2+) as a cofactor. Mn(2+) is required as a cofactor.

It is found in the cytoplasm. The enzyme catalyses (2R,3S)-3-isopropylmalate + NAD(+) = 4-methyl-2-oxopentanoate + CO2 + NADH. It participates in amino-acid biosynthesis; L-leucine biosynthesis; L-leucine from 3-methyl-2-oxobutanoate: step 3/4. Functionally, catalyzes the oxidation of 3-carboxy-2-hydroxy-4-methylpentanoate (3-isopropylmalate) to 3-carboxy-4-methyl-2-oxopentanoate. The product decarboxylates to 4-methyl-2 oxopentanoate. The sequence is that of 3-isopropylmalate dehydrogenase from Dehalococcoides mccartyi (strain ATCC BAA-2266 / KCTC 15142 / 195) (Dehalococcoides ethenogenes (strain 195)).